A 235-amino-acid chain; its full sequence is Urease accessory protein UreF (235 aa).

Belongs to the UreF family. As to quaternary structure, ureD, UreF and UreG form a complex that acts as a GTP-hydrolysis-dependent molecular chaperone, activating the urease apoprotein by helping to assemble the nickel containing metallocenter of UreC. The UreE protein probably delivers the nickel.

It localises to the cytoplasm. In terms of biological role, required for maturation of urease via the functional incorporation of the urease nickel metallocenter. The polypeptide is Urease accessory protein UreF (Psychrobacter cryohalolentis (strain ATCC BAA-1226 / DSM 17306 / VKM B-2378 / K5)).